The chain runs to 600 residues: Lamin-B2 (600 aa).

Residues 2 to 27 (SGTPIRGTPGGTPLSPTRISRLQEKE) form a head region. Serine 16 bears the Phosphoserine; by CDK1 mark. In terms of domain architecture, IF rod spans 25-381 (EKEELRQLND…KLLEGEEERL (357 aa)). The interval 28-64 (ELRQLNDRLAVYIDRVRALELENDRLLVKISEKEEVT) is coil 1A. Positions 75–212 (YESELADARR…NVFEEEIRET (138 aa)) are coil 1B. The segment at 237–379 (QALEDLRNQH…YRKLLEGEEE (143 aa)) is coil 2. Disordered stretches follow at residues 377 to 449 (EEER…QMSQ) and 568 to 600 (ENEEEEDEADFGEEDLFNQQGDPRTTSRGCLVM). The tract at residues 380 to 600 (RLKLSPSPSS…RTTSRGCLVM (221 aa)) is tail. The span at 383–410 (LSPSPSSRVTVSRATSSSSSSSTSLVRS) shows a compositional bias: low complexity. Residue serine 386 is modified to Phosphoserine. Residues 414–419 (KRRRIE) carry the Nuclear localization signal motif. The LTD domain occupies 445–562 (FQMSQQASAT…EEVAVRTVTK (118 aa)). Positions 569–583 (NEEEEDEADFGEEDL) are enriched in acidic residues. Positions 584–600 (FNQQGDPRTTSRGCLVM) are enriched in polar residues. A Cysteine methyl ester modification is found at cysteine 597. Cysteine 597 is lipidated: S-farnesyl cysteine. The propeptide at 598 to 600 (LVM) is removed in mature form.

The protein belongs to the intermediate filament family. As to quaternary structure, homodimer. Lamin dimers then assemble into dimeric head-to-tail polymers. Ultimately, two head-to-tail polymers assemble laterally into a protofilament with a uniformly shaped rod of 3.5 nm in diameter. Phosphorylation plays a key role in lamin organization, subcellular localization and nuclear envelope disintegration. Phosphorylation by CDK1 at Ser-16 at the onset of mitosis drives lamin disassembly and nuclear envelope breakdown.

The protein resides in the nucleus lamina. The protein localises to the nucleus envelope. It localises to the nucleus. Its subcellular location is the nucleoplasm. It is found in the nucleus matrix. In terms of biological role, lamins are intermediate filament proteins that assemble into a filamentous meshwork, and which constitute the major components of the nuclear lamina, a fibrous layer on the nucleoplasmic side of the inner nuclear membrane. Lamins provide a framework for the nuclear envelope, bridging the nuclear envelope and chromatin. Plays an important role in nuclear assembly, chromatin organization, nuclear membrane and telomere dynamics. This Gallus gallus (Chicken) protein is Lamin-B2 (LMNB2).